The primary structure comprises 132 residues: Monothiol glutaredoxin-S9 (132 aa).

The tract at residues A16–V38 is disordered. In terms of domain architecture, Glutaredoxin spans E35 to W131. [2Fe-2S] cluster is bound at residue C55. Positions A129 to L132 match the Responsive for interaction with TGA factors motif.

This sequence belongs to the glutaredoxin family. CC-type subfamily.

Its subcellular location is the cytoplasm. It localises to the nucleus. In terms of biological role, may only reduce GSH-thiol disulfides, but not protein disulfides. This is Monothiol glutaredoxin-S9 (GRXS9) from Oryza sativa subsp. japonica (Rice).